Consider the following 224-residue polypeptide: Uracil-DNA glycosylase 2 (224 aa).

Asp64 (proton acceptor) is an active-site residue.

The protein belongs to the uracil-DNA glycosylase (UDG) superfamily. UNG family.

It is found in the cytoplasm. The catalysed reaction is Hydrolyzes single-stranded DNA or mismatched double-stranded DNA and polynucleotides, releasing free uracil.. Functionally, excises uracil residues from the DNA which can arise as a result of misincorporation of dUMP residues by DNA polymerase or due to deamination of cytosine. This chain is Uracil-DNA glycosylase 2, found in Listeria monocytogenes serotype 4b (strain F2365).